The sequence spans 163 residues: Thiol peroxidase (163 aa).

The Thioredoxin domain occupies 16–162; the sequence is LQVGDKALDF…FEAAIAAAKA (147 aa). Residue Cys58 is the Cysteine sulfenic acid (-SOH) intermediate of the active site. Cys58 and Cys92 are oxidised to a cystine.

The protein belongs to the peroxiredoxin family. Tpx subfamily. In terms of assembly, homodimer.

The enzyme catalyses a hydroperoxide + [thioredoxin]-dithiol = an alcohol + [thioredoxin]-disulfide + H2O. Thiol-specific peroxidase that catalyzes the reduction of hydrogen peroxide and organic hydroperoxides to water and alcohols, respectively. Plays a role in cell protection against oxidative stress by detoxifying peroxides. The sequence is that of Thiol peroxidase from Streptococcus pneumoniae serotype 2 (strain D39 / NCTC 7466).